The primary structure comprises 173 residues: NADH-ubiquinone oxidoreductase chain 6 (173 aa).

The next 5 helical transmembrane spans lie at 1 to 21 (MVYFMFIMLVGLILGLMAVAS), 25 to 45 (PYFAALGLVVAAGVGCGLLVG), 53 to 73 (LVLFLIYLGGMLVVFAYTAAL), 82 to 102 (WGDWSVLLYVSVYLLGIFFVG), and 141 to 161 (GIMLVLGGWVLLLTLFVILEL).

Belongs to the complex I subunit 6 family.

The protein resides in the mitochondrion membrane. It catalyses the reaction a ubiquinone + NADH + 5 H(+)(in) = a ubiquinol + NAD(+) + 4 H(+)(out). Its function is as follows. Core subunit of the mitochondrial membrane respiratory chain NADH dehydrogenase (Complex I) that is believed to belong to the minimal assembly required for catalysis. Complex I functions in the transfer of electrons from NADH to the respiratory chain. The immediate electron acceptor for the enzyme is believed to be ubiquinone. The protein is NADH-ubiquinone oxidoreductase chain 6 (MT-ND6) of Squalus acanthias (Spiny dogfish).